Consider the following 122-residue polypeptide: UPF0482 protein Spro_2288 (122 aa).

The first 31 residues, 1 to 31 (MKTLSTQRLLRGMLPVAMLMLMGAWQAPALA), serve as a signal peptide directing secretion. The disordered stretch occupies residues 46–71 (SNSGAMSTEAARQSKQQFNDTKSLRN).

This sequence belongs to the UPF0482 family.

The polypeptide is UPF0482 protein Spro_2288 (Serratia proteamaculans (strain 568)).